The chain runs to 172 residues: ATP synthase subunit b (172 aa).

The helical transmembrane segment at 12 to 32 threads the bilayer; the sequence is SLYIGDLVFYIVTFIILMLLV. Composition is skewed to basic and acidic residues over residues 63-74 and 116-131; these read ESAEKMAAKRQA and AQKDAEQARRDALNSA. The tract at residues 63 to 131 is disordered; the sequence is ESAEKMAAKR…QARRDALNSA (69 aa).

This sequence belongs to the ATPase B chain family. F-type ATPases have 2 components, F(1) - the catalytic core - and F(0) - the membrane proton channel. F(1) has five subunits: alpha(3), beta(3), gamma(1), delta(1), epsilon(1). F(0) has three main subunits: a(1), b(2) and c(10-14). The alpha and beta chains form an alternating ring which encloses part of the gamma chain. F(1) is attached to F(0) by a central stalk formed by the gamma and epsilon chains, while a peripheral stalk is formed by the delta and b chains.

It is found in the cell membrane. Its function is as follows. F(1)F(0) ATP synthase produces ATP from ADP in the presence of a proton or sodium gradient. F-type ATPases consist of two structural domains, F(1) containing the extramembraneous catalytic core and F(0) containing the membrane proton channel, linked together by a central stalk and a peripheral stalk. During catalysis, ATP synthesis in the catalytic domain of F(1) is coupled via a rotary mechanism of the central stalk subunits to proton translocation. Functionally, component of the F(0) channel, it forms part of the peripheral stalk, linking F(1) to F(0). This Limosilactobacillus reuteri (strain DSM 20016) (Lactobacillus reuteri) protein is ATP synthase subunit b.